An 84-amino-acid chain; its full sequence is Large ribosomal subunit protein bL31B (84 aa).

Belongs to the bacterial ribosomal protein bL31 family. Type B subfamily. As to quaternary structure, part of the 50S ribosomal subunit.

The sequence is that of Large ribosomal subunit protein bL31B from Phocaeicola vulgatus (strain ATCC 8482 / DSM 1447 / JCM 5826 / CCUG 4940 / NBRC 14291 / NCTC 11154) (Bacteroides vulgatus).